The primary structure comprises 255 residues: Pimeloyl-[acyl-carrier protein] methyl ester esterase (255 aa).

Substrate is bound by residues tryptophan 18, 78 to 79 (SL), and 139 to 143 (FLALD). Residue serine 78 is the Nucleophile of the active site. Active-site residues include aspartate 203 and histidine 233. Residue histidine 233 coordinates substrate.

This sequence belongs to the AB hydrolase superfamily. Carboxylesterase BioH family. As to quaternary structure, monomer.

It localises to the cytoplasm. It carries out the reaction 6-carboxyhexanoyl-[ACP] methyl ester + H2O = 6-carboxyhexanoyl-[ACP] + methanol + H(+). It participates in cofactor biosynthesis; biotin biosynthesis. Its function is as follows. The physiological role of BioH is to remove the methyl group introduced by BioC when the pimeloyl moiety is complete. It allows to synthesize pimeloyl-ACP via the fatty acid synthetic pathway through the hydrolysis of the ester bonds of pimeloyl-ACP esters. The protein is Pimeloyl-[acyl-carrier protein] methyl ester esterase of Xylella fastidiosa (strain M12).